The sequence spans 98 residues: NADH-ubiquinone oxidoreductase chain 4L (98 aa).

Helical transmembrane passes span 1–21 (MTPTYMNIMLAFTISLLGMLI), 29–49 (SLLCLEGMMMSLFIMTTLIAL), and 61–81 (IILLVFAACEAAVGLALLVSI).

Belongs to the complex I subunit 4L family. In terms of assembly, core subunit of respiratory chain NADH dehydrogenase (Complex I) which is composed of 45 different subunits.

Its subcellular location is the mitochondrion inner membrane. The catalysed reaction is a ubiquinone + NADH + 5 H(+)(in) = a ubiquinol + NAD(+) + 4 H(+)(out). Core subunit of the mitochondrial membrane respiratory chain NADH dehydrogenase (Complex I) which catalyzes electron transfer from NADH through the respiratory chain, using ubiquinone as an electron acceptor. Part of the enzyme membrane arm which is embedded in the lipid bilayer and involved in proton translocation. This Macaca maura (Moor macaque) protein is NADH-ubiquinone oxidoreductase chain 4L (MT-ND4L).